We begin with the raw amino-acid sequence, 129 residues long: NADH-quinone oxidoreductase subunit A (129 aa).

The next 3 membrane-spanning stretches (helical) occupy residues 6–26, 63–83, and 89–109; these read FWPFILYAGMVLVLVALIVGF, LVAVLFVIFDMEAAFIFAWAV, and GWIGYGGALAFITILGVALIY.

It belongs to the complex I subunit 3 family. As to quaternary structure, NDH-1 is composed of 14 different subunits. Subunits NuoA, H, J, K, L, M, N constitute the membrane sector of the complex.

The protein localises to the cell inner membrane. It carries out the reaction a quinone + NADH + 5 H(+)(in) = a quinol + NAD(+) + 4 H(+)(out). Functionally, NDH-1 shuttles electrons from NADH, via FMN and iron-sulfur (Fe-S) centers, to quinones in the respiratory chain. The immediate electron acceptor for the enzyme in this species is believed to be ubiquinone. Couples the redox reaction to proton translocation (for every two electrons transferred, four hydrogen ions are translocated across the cytoplasmic membrane), and thus conserves the redox energy in a proton gradient. The polypeptide is NADH-quinone oxidoreductase subunit A (Nitrosococcus oceani (strain ATCC 19707 / BCRC 17464 / JCM 30415 / NCIMB 11848 / C-107)).